Reading from the N-terminus, the 142-residue chain is Large ribosomal subunit protein uL13 (142 aa).

The protein belongs to the universal ribosomal protein uL13 family. In terms of assembly, part of the 50S ribosomal subunit.

Functionally, this protein is one of the early assembly proteins of the 50S ribosomal subunit, although it is not seen to bind rRNA by itself. It is important during the early stages of 50S assembly. The chain is Large ribosomal subunit protein uL13 from Psychromonas ingrahamii (strain DSM 17664 / CCUG 51855 / 37).